Consider the following 513-residue polypeptide: Prostaglandin E2 receptor EP4 subtype (513 aa).

Residues Met1–Ser44 are Extracellular-facing. Asn32 is a glycosylation site (N-linked (GlcNAc...) asparagine). Residues Pro45–Cys68 form a helical membrane-spanning segment. Over Lys69–Tyr80 the chain is Cytoplasmic. The helical transmembrane segment at Thr81–Thr104 threads the bilayer. Residues Tyr105–Thr121 are Extracellular-facing. Cys117 and Cys195 are disulfide-bonded. The chain crosses the membrane as a helical span at residues Phe122–Ile140. The Cytoplasmic portion of the chain corresponds to Glu141–Leu160. A helical transmembrane segment spans residues Ala161–Arg185. At Ser186–Phe209 the chain is on the extracellular side. The chain crosses the membrane as a helical span at residues Ser210–Leu236. Over Arg237–Glu295 the chain is Cytoplasmic. The chain crosses the membrane as a helical span at residues Ile296–Asn323. The Extracellular segment spans residues Gln324–Leu340. The chain crosses the membrane as a helical span at residues Gln341–Leu360. Over Arg361 to Ile513 the chain is Cytoplasmic. The interval Gly383–Gly403 is disordered. Positions Arg384–Gly403 are enriched in polar residues. Ser402, Ser405, and Ser407 each carry phosphoserine.

It belongs to the G-protein coupled receptor 1 family. In terms of assembly, interacts with FEM1A. Post-translationally, phosphorylation mediates agonist-mediated desensitization by promoting cytoplasmic retention. As to expression, abundant expression in ileum, thymus and mastocytoma P-815 cells. Also observed in lung, spleen, heart and uterus.

The protein resides in the cell membrane. Receptor for prostaglandin E2 (PGE2). The activity of this receptor is mediated by G(s) proteins that stimulate adenylate cyclase. Has a relaxing effect on smooth muscle. May play an important role in regulating renal hemodynamics, intestinal epithelial transport, adrenal aldosterone secretion, and uterine function. The chain is Prostaglandin E2 receptor EP4 subtype (Ptger4) from Mus musculus (Mouse).